A 107-amino-acid polypeptide reads, in one-letter code: UPF0060 membrane protein Atu1058 (107 aa).

4 helical membrane passes run 5–25, 32–52, 59–79, and 85–105; these read LIYVLAAVAEIAGCFSFWAWL, WILLPGMVALAAFAWLLTLVA, AYAAYGGIYIAASLFWLWGVE, and RWDIAGGVVCLAGTAIILFGP.

It belongs to the UPF0060 family.

It is found in the cell inner membrane. The chain is UPF0060 membrane protein Atu1058 from Agrobacterium fabrum (strain C58 / ATCC 33970) (Agrobacterium tumefaciens (strain C58)).